The chain runs to 207 residues: Methylated-DNA--protein-cysteine methyltransferase (207 aa).

Residue Cys-5 participates in Zn(2+) binding. Ser-14 is modified (phosphoserine). Zn(2+) contacts are provided by Cys-24, His-29, and His-85. 5 residues coordinate DNA: Thr-95, Tyr-114, Gln-115, Asn-123, and Arg-128. Cys-145 functions as the Nucleophile; methyl group acceptor in the catalytic mechanism. Ser-151 lines the DNA pocket. Residue Ser-201 is modified to Phosphoserine.

It belongs to the MGMT family. Requires Zn(2+) as cofactor.

It is found in the nucleus. The catalysed reaction is a 6-O-methyl-2'-deoxyguanosine in DNA + L-cysteinyl-[protein] = S-methyl-L-cysteinyl-[protein] + a 2'-deoxyguanosine in DNA. It carries out the reaction a 4-O-methyl-thymidine in DNA + L-cysteinyl-[protein] = a thymidine in DNA + S-methyl-L-cysteinyl-[protein]. Involved in the cellular defense against the biological effects of O6-methylguanine (O6-MeG) and O4-methylthymine (O4-MeT) in DNA. Repairs the methylated nucleobase in DNA by stoichiometrically transferring the methyl group to a cysteine residue in the enzyme. This is a suicide reaction: the enzyme is irreversibly inactivated. This chain is Methylated-DNA--protein-cysteine methyltransferase (MGMT), found in Homo sapiens (Human).